The primary structure comprises 247 residues: Synaptonemal complex central element protein 1-like (247 aa).

A coiled-coil region spans residues 71 to 196 (SEELGEAQAL…LQEARETWDS (126 aa)). Residues 189 to 247 (EARETWDSPGNCGLKTELEELEGQSQRSPEAQNDKGEASQEEQHHLETSEELPRTGTLC) form a disordered region. A compositionally biased stretch (basic and acidic residues) spans 220–241 (QNDKGEASQEEQHHLETSEELP).

This sequence belongs to the SYCE family. In terms of tissue distribution, isoform 1 is abundantly expressed in testis and weakly in ovary, it is not found in other tissues. Isoform 2 is expressed in testis and poorly in brain, heart, lung and other examined tissues.

In terms of biological role, may be involved in meiosis. Isoform 1 may be involved in meiosis during spermatogenesis while isoform 2 is probably related to a later stage of meiosis, in the development stage of secondary spermatocytes and spermatids. The sequence is that of Synaptonemal complex central element protein 1-like (Syce1l) from Mus musculus (Mouse).